The chain runs to 845 residues: METQRNYPSLWRWGTLILGMLLICSAAQNLWVTVYYGVPVWKEAKTTLFCASDAKAYETEKHNVWATHACVPTDPNPQEMVMENVTESFNMWENNMVEQMHTDIISLWDQSLKPCVKLTPLCVTLNCTNVRNNTSNSTSSMEAGGELTNCSFNVTTVLRDKQQKVHALFYRLDVVPIDNNSTQYRLINCNTSVITQACPKVSFEPIPIHYCAPAGFAILKCNNKTFNGTGLCTNVSTVQCTHGIRPVVSTQLLLNGSLAEEQIIIRTKNISDNTKNIIVQLKTPVNITCTRPNNNTRTSIHLGPGRAFYATGDIIGDIRQAHCNISRTDWNKTLHQVVTQLGIHLNNRTISFKPNSGGDMEVRTHSFNCRGEFFYCNTSGLFNSSWEMHTNYTSNDTKGNENITLPCRIKQIVNMWQRVGRAMYAPPIQGNIMCVSNITGLILTIDEGNASAENYTFRPGGGDMRDNWRSELYKYKVVKIEPLGIAPTKTRRRVVEREKRAVGMGASFLGFLGAAGSTMGAASITLTVQARQLLSGIVQQQSNLLRAIQARQHMLQLTVWGIKQLQARVLAVERYLRDQQLLGIWGCSGKLICTTNVPWNSSWSNKSQSEIWDNMTWMEWDKQISNYTEEIYRLLEVSQTQQEKNEQDLLALDKWASLWTWFDISHWLWYIKIFIMIVGGLIGLRIIFAVLSIVNRVRQGYSPLSFQTLVPNPRGPDRPEGTEEGGGEQDRDRSVRLVNGFLPVVWDDLRSLSLFSYRLLRDLLLIVVRTVELLGRRGREALKYLWNLLQYWGQELKNSAIDLLNTTAIAVAEGTDGIIVIVQRAWRAILHIPRRIRQGFERSLL.

Residues 1–28 form the signal peptide; sequence METQRNYPSLWRWGTLILGMLLICSAAQ. At 29-673 the chain is on the extracellular side; that stretch reads NLWVTVYYGV…ISHWLWYIKI (645 aa). C50 and C70 form a disulfide bridge. N-linked (GlcNAc...) asparagine; by host glycosylation is found at N84, N126, N132, N133, N136, N149, N153, N179, N180, N190, N223, N227, N234, N255, N269, N286, N294, N324, N331, and N347. 5 disulfide bridges follow: C115–C198, C122–C189, C127–C150, C211–C240, and C221–C232. The tract at residues 127–149 is V1; that stretch reads CTNVRNNTSNSTSSMEAGGELTN. The interval 150 to 189 is V2; that stretch reads CSFNVTTVLRDKQQKVHALFYRLDVVPIDNNSTQYRLINC. A V3 region spans residues 289-322; the sequence is CTRPNNNTRTSIHLGPGRAFYATGDIIGDIRQAH. An intrachain disulfide couples C289 to C323. Positions 355-365 are CD4-binding loop; that stretch reads NSGGDMEVRTH. Cystine bridges form between C369-C434 and C376-C407. The segment at 376-407 is V4; that stretch reads CNTSGLFNSSWEMHTNYTSNDTKGNENITLPC. N-linked (GlcNAc...) asparagine; by host glycans are attached at residues N377, N383, N391, N395, N402, N437, N449, and N454. V5 regions lie at residues 450 to 460 and 452 to 460; these read ASAENYTFRPG and AENYTFRPG. The segment at 501 to 521 is fusion peptide; the sequence is AVGMGASFLGFLGAAGSTMGA. The segment at 563–581 is immunosuppression; it reads KQLQARVLAVERYLRDQQL. C587 and C593 are joined by a disulfide. N600, N605, N614, and N626 each carry an N-linked (GlcNAc...) asparagine; by host glycan. The stretch at 622–656 forms a coiled coil; it reads KQISNYTEEIYRLLEVSQTQQEKNEQDLLALDKWA. Residues 651–672 form an MPER; binding to GalCer region; sequence ALDKWASLWTWFDISHWLWYIK. A helical membrane pass occupies residues 674–694; sequence FIMIVGGLIGLRIIFAVLSIV. The Cytoplasmic portion of the chain corresponds to 695–845; it reads NRVRQGYSPL…IRQGFERSLL (151 aa). The YXXL motif; contains endocytosis signal signature appears at 701–704; it reads YSPL. The tract at residues 708–731 is disordered; it reads TLVPNPRGPDRPEGTEEGGGEQDR. A Di-leucine internalization motif motif is present at residues 844-845; it reads LL.

This sequence belongs to the HIV-1 env protein family. As to quaternary structure, the mature envelope protein (Env) consists of a homotrimer of non-covalently associated gp120-gp41 heterodimers. The resulting complex protrudes from the virus surface as a spike. There seems to be as few as 10 spikes on the average virion. Interacts with host CD4, CCR5 and CXCR4. Gp120 also interacts with the C-type lectins CD209/DC-SIGN and CLEC4M/DC-SIGNR (collectively referred to as DC-SIGN(R)). Gp120 and gp41 interact with GalCer. Gp120 interacts with host ITGA4/ITGB7 complex; on CD4+ T-cells, this interaction results in rapid activation of integrin ITGAL/LFA-1, which facilitates efficient cell-to-cell spreading of HIV-1. Gp120 interacts with cell-associated heparan sulfate; this interaction increases virus infectivity on permissive cells and may be involved in infection of CD4- cells. The mature envelope protein (Env) consists of a homotrimer of non-covalently associated gp120-gp41 heterodimers. The resulting complex protrudes from the virus surface as a spike. There seems to be as few as 10 spikes on the average virion. In terms of processing, highly glycosylated by host. The high number of glycan on the protein is reffered to as 'glycan shield' because it contributes to hide protein sequence from adaptive immune system. Palmitoylation of the transmembrane protein and of Env polyprotein (prior to its proteolytic cleavage) is essential for their association with host cell membrane lipid rafts. Palmitoylation is therefore required for envelope trafficking to classical lipid rafts, but not for viral replication. Post-translationally, specific enzymatic cleavages in vivo yield mature proteins. Envelope glycoproteins are synthesized as an inactive precursor that is heavily N-glycosylated and processed likely by host cell furin in the Golgi to yield the mature SU and TM proteins. The cleavage site between SU and TM requires the minimal sequence [KR]-X-[KR]-R. About 2 of the 9 disulfide bonds of gp41 are reduced by P4HB/PDI, following binding to CD4 receptor.

Its subcellular location is the virion membrane. It is found in the host cell membrane. The protein resides in the host endosome membrane. In terms of biological role, oligomerizes in the host endoplasmic reticulum into predominantly trimers. In a second time, gp160 transits in the host Golgi, where glycosylation is completed. The precursor is then proteolytically cleaved in the trans-Golgi and thereby activated by cellular furin or furin-like proteases to produce gp120 and gp41. Its function is as follows. Attaches the virus to the host lymphoid cell by binding to the primary receptor CD4. This interaction induces a structural rearrangement creating a high affinity binding site for a chemokine coreceptor like CXCR4 and/or CCR5. Acts as a ligand for CD209/DC-SIGN and CLEC4M/DC-SIGNR, which are respectively found on dendritic cells (DCs), and on endothelial cells of liver sinusoids and lymph node sinuses. These interactions allow capture of viral particles at mucosal surfaces by these cells and subsequent transmission to permissive cells. HIV subverts the migration properties of dendritic cells to gain access to CD4+ T-cells in lymph nodes. Virus transmission to permissive T-cells occurs either in trans (without DCs infection, through viral capture and transmission), or in cis (following DCs productive infection, through the usual CD4-gp120 interaction), thereby inducing a robust infection. In trans infection, bound virions remain infectious over days and it is proposed that they are not degraded, but protected in non-lysosomal acidic organelles within the DCs close to the cell membrane thus contributing to the viral infectious potential during DCs' migration from the periphery to the lymphoid tissues. On arrival at lymphoid tissues, intact virions recycle back to DCs' cell surface allowing virus transmission to CD4+ T-cells. Acts as a class I viral fusion protein. Under the current model, the protein has at least 3 conformational states: pre-fusion native state, pre-hairpin intermediate state, and post-fusion hairpin state. During fusion of viral and target intracellular membranes, the coiled coil regions (heptad repeats) assume a trimer-of-hairpins structure, positioning the fusion peptide in close proximity to the C-terminal region of the ectodomain. The formation of this structure appears to drive apposition and subsequent fusion of viral and target cell membranes. Complete fusion occurs in host cell endosomes and is dynamin-dependent, however some lipid transfer might occur at the plasma membrane. The virus undergoes clathrin-dependent internalization long before endosomal fusion, thus minimizing the surface exposure of conserved viral epitopes during fusion and reducing the efficacy of inhibitors targeting these epitopes. Membranes fusion leads to delivery of the nucleocapsid into the cytoplasm. The protein is Envelope glycoprotein gp160 of Homo sapiens (Human).